We begin with the raw amino-acid sequence, 372 residues long: Glutamate 5-kinase (372 aa).

Lys14 serves as a coordination point for ATP. Ser54, Asp141, and Asn153 together coordinate substrate. ATP is bound at residue Thr173–Asp174. One can recognise a PUA domain in the interval Arg280–Val358.

It belongs to the glutamate 5-kinase family.

Its subcellular location is the cytoplasm. It catalyses the reaction L-glutamate + ATP = L-glutamyl 5-phosphate + ADP. It participates in amino-acid biosynthesis; L-proline biosynthesis; L-glutamate 5-semialdehyde from L-glutamate: step 1/2. Catalyzes the transfer of a phosphate group to glutamate to form L-glutamate 5-phosphate. The chain is Glutamate 5-kinase from Pseudomonas aeruginosa (strain UCBPP-PA14).